Consider the following 389-residue polypeptide: Type II methyltransferase M1.ScrFI (389 aa).

The region spanning 16-71 is the HTH cro/C1-type domain; sequence IKEKRLRLNMTQKELADAVGMSKNGDRTIRRWENGETCPSQLEISAILRFPEIAPF. The SAM-dependent MTase C5-type domain occupies 79–387; that stretch reads YKMIDLFAGI…EKMLEVLEKS (309 aa). C149 is a catalytic residue.

It belongs to the class I-like SAM-binding methyltransferase superfamily. C5-methyltransferase family.

It carries out the reaction a 2'-deoxycytidine in DNA + S-adenosyl-L-methionine = a 5-methyl-2'-deoxycytidine in DNA + S-adenosyl-L-homocysteine + H(+). A methylase, recognizes the double-stranded sequence 5'-CCNGG-3', methylates C-2 on both strands, and protects the DNA from cleavage by the ScrFI endonuclease. The protein is Type II methyltransferase M1.ScrFI (scrFIAM) of Lactococcus lactis subsp. cremoris (Streptococcus cremoris).